The following is a 331-amino-acid chain: Fructose-1,6-bisphosphatase class 1 (331 aa).

Mg(2+) is bound by residues E88, D108, L110, and D111. Substrate contacts are provided by residues 111 to 114 and N201; that span reads DGSS. E273 is a binding site for Mg(2+).

It belongs to the FBPase class 1 family. In terms of assembly, homotetramer. Mg(2+) serves as cofactor.

The protein localises to the cytoplasm. The enzyme catalyses beta-D-fructose 1,6-bisphosphate + H2O = beta-D-fructose 6-phosphate + phosphate. It functions in the pathway carbohydrate biosynthesis; gluconeogenesis. The protein is Fructose-1,6-bisphosphatase class 1 of Methylobacillus flagellatus (strain ATCC 51484 / DSM 6875 / VKM B-1610 / KT).